The chain runs to 154 residues: 6,7-dimethyl-8-ribityllumazine synthase (154 aa).

5-amino-6-(D-ribitylamino)uracil is bound by residues Phe23, 57–59, and 81–83; these read AFE and AII. 86–87 lines the (2S)-2-hydroxy-3-oxobutyl phosphate pocket; sequence ST. His89 serves as the catalytic Proton donor. Phe114 contacts 5-amino-6-(D-ribitylamino)uracil. Residue Arg128 coordinates (2S)-2-hydroxy-3-oxobutyl phosphate.

This sequence belongs to the DMRL synthase family.

The catalysed reaction is (2S)-2-hydroxy-3-oxobutyl phosphate + 5-amino-6-(D-ribitylamino)uracil = 6,7-dimethyl-8-(1-D-ribityl)lumazine + phosphate + 2 H2O + H(+). It functions in the pathway cofactor biosynthesis; riboflavin biosynthesis; riboflavin from 2-hydroxy-3-oxobutyl phosphate and 5-amino-6-(D-ribitylamino)uracil: step 1/2. Functionally, catalyzes the formation of 6,7-dimethyl-8-ribityllumazine by condensation of 5-amino-6-(D-ribitylamino)uracil with 3,4-dihydroxy-2-butanone 4-phosphate. This is the penultimate step in the biosynthesis of riboflavin. This Nitratiruptor sp. (strain SB155-2) protein is 6,7-dimethyl-8-ribityllumazine synthase.